Here is a 202-residue protein sequence, read N- to C-terminus: Adapter protein MecA 2 (202 aa).

It belongs to the MecA family. As to quaternary structure, homodimer.

Enables the recognition and targeting of unfolded and aggregated proteins to the ClpC protease or to other proteins involved in proteolysis. Acts negatively in the development of competence by binding ComK and recruiting it to the ClpCP protease. When overexpressed, inhibits sporulation. Also involved in Spx degradation by ClpC. The polypeptide is Adapter protein MecA 2 (mecA2) (Bacillus cereus (strain ATCC 14579 / DSM 31 / CCUG 7414 / JCM 2152 / NBRC 15305 / NCIMB 9373 / NCTC 2599 / NRRL B-3711)).